Here is a 559-residue protein sequence, read N- to C-terminus: Dihydroxy-acid dehydratase (559 aa).

D80 is a Mg(2+) binding site. C121 lines the [2Fe-2S] cluster pocket. Positions 122 and 123 each coordinate Mg(2+). K123 carries the N6-carboxylysine modification. C194 serves as a coordination point for [2Fe-2S] cluster. Residue E447 coordinates Mg(2+). S473 acts as the Proton acceptor in catalysis.

The protein belongs to the IlvD/Edd family. As to quaternary structure, homodimer. Requires [2Fe-2S] cluster as cofactor. The cofactor is Mg(2+).

It carries out the reaction (2R)-2,3-dihydroxy-3-methylbutanoate = 3-methyl-2-oxobutanoate + H2O. The enzyme catalyses (2R,3R)-2,3-dihydroxy-3-methylpentanoate = (S)-3-methyl-2-oxopentanoate + H2O. It functions in the pathway amino-acid biosynthesis; L-isoleucine biosynthesis; L-isoleucine from 2-oxobutanoate: step 3/4. Its pathway is amino-acid biosynthesis; L-valine biosynthesis; L-valine from pyruvate: step 3/4. Functions in the biosynthesis of branched-chain amino acids. Catalyzes the dehydration of (2R,3R)-2,3-dihydroxy-3-methylpentanoate (2,3-dihydroxy-3-methylvalerate) into 2-oxo-3-methylpentanoate (2-oxo-3-methylvalerate) and of (2R)-2,3-dihydroxy-3-methylbutanoate (2,3-dihydroxyisovalerate) into 2-oxo-3-methylbutanoate (2-oxoisovalerate), the penultimate precursor to L-isoleucine and L-valine, respectively. The chain is Dihydroxy-acid dehydratase from Chlorobium chlorochromatii (strain CaD3).